Reading from the N-terminus, the 297-residue chain is Homoserine kinase (297 aa).

82 to 92 (PLTRGLGSSAS) is an ATP binding site.

The protein belongs to the GHMP kinase family. Homoserine kinase subfamily.

It is found in the cytoplasm. It carries out the reaction L-homoserine + ATP = O-phospho-L-homoserine + ADP + H(+). Its pathway is amino-acid biosynthesis; L-threonine biosynthesis; L-threonine from L-aspartate: step 4/5. Catalyzes the ATP-dependent phosphorylation of L-homoserine to L-homoserine phosphate. The chain is Homoserine kinase from Bacillus cereus (strain B4264).